Here is a 680-residue protein sequence, read N- to C-terminus: MSNKPTTPNLVDPKILFPAAKAAFVKLDPRQLVRNPVIFVTEAMAALVTLFFVLDVATGGGSRLFSGQIAAWLWFTVLFATFAEAVAEGRGKAQADFLRHTKSELSARKLVAPEGRETKEIPATMLKVGDLVLVQAGELIPGDGEVVEGVASVNESAITGESAPVIREAGGDRSAVTGGTEVLSDWVKVRITTAPGSTFVDRMIALIEGAQRQKTPNEIALSILLSGLTLIFLIAVVTLWGLASYSATVLSVTVLSALLVTLIPTTIGGLLSAIGIAGMDRLVRFNVIATSGRAVEAAGDVDTLLLDKTGTITFGNRMASDFLPVPGVTVEELADAALLASLADETPEGRSIVALATGEFGRGASQTGIDAVVPFTAETRLSGVDHRGRRLRKGAVDSVLRFAGLSDSKIPQEFRQAVDKVARTGGTPLAVADGNRLLGVVHLKDVVKPGIKERFSELRAMGIRTVMVTGDNPITAAAIASEAGVDDFLAEATPEDKLAYIRKEQNGGRLIAMCGDGTNDAPALAQADVGVAMQTGTQAAREAANMVDLDSSPTKLIEIVEIGKQLLMTRGSLTTFSIANDVAKYFAIIPALFVTTYPALGVLNIMGLASPQSAILSAVIFNALIIVALIPLALKGVRYRPVGAAALLRGNLLVYGLGGLVLPFAGIKLIDLAVSNLNLV.

Transmembrane regions (helical) follow at residues 37–57 (VIFV…LDVA), 69–89 (IAAW…VAEG), 223–243 (ILLS…WGLA), and 257–277 (ALLV…IGIA). Residue aspartate 307 is the 4-aspartylphosphate intermediate of the active site. ATP is bound by residues aspartate 344, glutamate 348, 375–382 (FTAETRLS), and lysine 393. Mg(2+) contacts are provided by aspartate 516 and aspartate 520. Transmembrane regions (helical) follow at residues 586 to 606 (FAII…LNIM), 614 to 634 (AILS…PLAL), and 652 to 672 (LLVY…LIDL).

Belongs to the cation transport ATPase (P-type) (TC 3.A.3) family. Type IA subfamily. The system is composed of three essential subunits: KdpA, KdpB and KdpC.

It localises to the cell inner membrane. The enzyme catalyses K(+)(out) + ATP + H2O = K(+)(in) + ADP + phosphate + H(+). In terms of biological role, part of the high-affinity ATP-driven potassium transport (or Kdp) system, which catalyzes the hydrolysis of ATP coupled with the electrogenic transport of potassium into the cytoplasm. This subunit is responsible for energy coupling to the transport system and for the release of the potassium ions to the cytoplasm. This chain is Potassium-transporting ATPase ATP-binding subunit, found in Rhizobium meliloti (strain 1021) (Ensifer meliloti).